The chain runs to 621 residues: Threonine--tRNA ligase (621 aa).

The tract at residues 1-137 (MRILQLHCDS…ESSKVVTKDS (137 aa)) is editing domain. Residues 128–150 (ESSKVVTKDSTTKDDDEDTSDAL) form a disordered region. Residues 202-501 (PHVALMKKLA…SKKGKKPQLP (300 aa)) are catalytic. 3 residues coordinate Zn(2+): C294, H346, and H470. Polar residues predominate over residues 598–612 (QTSGKPYTGLNQSQH). Positions 598–621 (QTSGKPYTGLNQSQHLSKRPQLMV) are disordered.

The protein belongs to the class-II aminoacyl-tRNA synthetase family. In terms of assembly, homodimer. It depends on Zn(2+) as a cofactor.

The protein resides in the cytoplasm. The enzyme catalyses tRNA(Thr) + L-threonine + ATP = L-threonyl-tRNA(Thr) + AMP + diphosphate + H(+). Functionally, catalyzes the attachment of threonine to tRNA(Thr) in a two-step reaction: L-threonine is first activated by ATP to form Thr-AMP and then transferred to the acceptor end of tRNA(Thr). Also edits incorrectly charged L-seryl-tRNA(Thr). In Nitrosopumilus maritimus (strain SCM1), this protein is Threonine--tRNA ligase.